Consider the following 478-residue polypeptide: 3-isopropylmalate dehydratase large subunit (478 aa).

Residues cysteine 347, cysteine 407, and cysteine 410 each coordinate [4Fe-4S] cluster.

This sequence belongs to the aconitase/IPM isomerase family. LeuC type 1 subfamily. As to quaternary structure, heterodimer of LeuC and LeuD. It depends on [4Fe-4S] cluster as a cofactor.

The enzyme catalyses (2R,3S)-3-isopropylmalate = (2S)-2-isopropylmalate. It functions in the pathway amino-acid biosynthesis; L-leucine biosynthesis; L-leucine from 3-methyl-2-oxobutanoate: step 2/4. In terms of biological role, catalyzes the isomerization between 2-isopropylmalate and 3-isopropylmalate, via the formation of 2-isopropylmaleate. The polypeptide is 3-isopropylmalate dehydratase large subunit (Prochlorococcus marinus (strain MIT 9303)).